The primary structure comprises 338 residues: MSSLRLLISDSYDPWFNLAVEECIFRQMSPDQRVLFLWRNADTVVIGRAQNPWKECNTRRMEQDGVKLARRSSGGGAVFHDLGNTCFTFMAGKPGYDKTISTQIILNALASLGIQATASGRNDLVVINGEDERKVSGSAYKETKDRGFHHGTLLLNADLSRLADYLNPDPKKLQAKGITSVRSRVTNLVELLPGIDHEKIRTAIEQAFFAYYDEQVSAEVISPQSLPNLPGFTEQFAKQSSWEWNFGQAPAFSHVVDTRFTWGGIELHFDVLHGAIDRCQIFTDSLNPTPLEALAQRLQGAAYRPDAIDKICQHWIDDFPELQTELQQACHWLVEVLR.

The BPL/LPL catalytic domain maps to serine 29 to valine 216. ATP contacts are provided by residues arginine 71, glycine 76–phenylalanine 79, and lysine 134. Residue lysine 134 coordinates (R)-lipoate.

Belongs to the LplA family. As to quaternary structure, monomer.

The protein resides in the cytoplasm. It catalyses the reaction L-lysyl-[lipoyl-carrier protein] + (R)-lipoate + ATP = N(6)-[(R)-lipoyl]-L-lysyl-[lipoyl-carrier protein] + AMP + diphosphate + H(+). The protein operates within protein modification; protein lipoylation via exogenous pathway; protein N(6)-(lipoyl)lysine from lipoate: step 1/2. Its pathway is protein modification; protein lipoylation via exogenous pathway; protein N(6)-(lipoyl)lysine from lipoate: step 2/2. Catalyzes both the ATP-dependent activation of exogenously supplied lipoate to lipoyl-AMP and the transfer of the activated lipoyl onto the lipoyl domains of lipoate-dependent enzymes. This Yersinia pseudotuberculosis serotype IB (strain PB1/+) protein is Lipoate-protein ligase A.